Here is a 333-residue protein sequence, read N- to C-terminus: Phosphoribosylformylglycinamidine cyclo-ligase (333 aa).

This sequence belongs to the AIR synthase family.

The protein localises to the cytoplasm. The catalysed reaction is 2-formamido-N(1)-(5-O-phospho-beta-D-ribosyl)acetamidine + ATP = 5-amino-1-(5-phospho-beta-D-ribosyl)imidazole + ADP + phosphate + H(+). The protein operates within purine metabolism; IMP biosynthesis via de novo pathway; 5-amino-1-(5-phospho-D-ribosyl)imidazole from N(2)-formyl-N(1)-(5-phospho-D-ribosyl)glycinamide: step 2/2. The protein is Phosphoribosylformylglycinamidine cyclo-ligase of Clostridium perfringens (strain 13 / Type A).